Reading from the N-terminus, the 260-residue chain is UPF0246 protein Bcenmc03_2247 (260 aa).

It belongs to the UPF0246 family.

The protein is UPF0246 protein Bcenmc03_2247 of Burkholderia orbicola (strain MC0-3).